The primary structure comprises 467 residues: Hydroxyacid-oxoacid transhydrogenase, mitochondrial (467 aa).

Lys445 is subject to N6-acetyllysine. Ser452 bears the Phosphoserine mark.

This sequence belongs to the iron-containing alcohol dehydrogenase family. Hydroxyacid-oxoacid transhydrogenase subfamily.

The protein resides in the mitochondrion. The catalysed reaction is (S)-3-hydroxybutanoate + 2-oxoglutarate = (R)-2-hydroxyglutarate + acetoacetate. The enzyme catalyses 4-hydroxybutanoate + 2-oxoglutarate = (R)-2-hydroxyglutarate + succinate semialdehyde. Catalyzes the cofactor-independent reversible oxidation of gamma-hydroxybutyrate (GHB) to succinic semialdehyde (SSA) coupled to reduction of 2-ketoglutarate (2-KG) to D-2-hydroxyglutarate (D-2-HG). L-3-hydroxybutyrate (L-3-OHB) is also a substrate for HOT when using 2-KG as hydrogen acceptor, resulting in the formation of D-2-HG. The chain is Hydroxyacid-oxoacid transhydrogenase, mitochondrial (ADHFE1) from Pongo abelii (Sumatran orangutan).